A 215-amino-acid polypeptide reads, in one-letter code: UPF0323 lipoprotein HP_0232 (215 aa).

The signal sequence occupies residues 1 to 27 (MKKPYRKISDYAIVGGLSALVMVSIVG). A lipid anchor (N-palmitoyl cysteine) is attached at cysteine 28. Residue cysteine 28 is the site of S-diacylglycerol cysteine attachment. Polar residues predominate over residues 158–169 (QRTYKSPQAYQR). The disordered stretch occupies residues 158–215 (QRTYKSPQAYQRSQNSFSKSAPSASSMGGASKGQSGFFGSSRPTSSPAVSSGTRGFNS). The span at 170-208 (SQNSFSKSAPSASSMGGASKGQSGFFGSSRPTSSPAVSS) shows a compositional bias: low complexity.

It belongs to the UPF0323 family.

The protein resides in the cell membrane. This Helicobacter pylori (strain ATCC 700392 / 26695) (Campylobacter pylori) protein is UPF0323 lipoprotein HP_0232.